Consider the following 106-residue polypeptide: Large ribosomal subunit protein uL24 (106 aa).

It belongs to the universal ribosomal protein uL24 family. As to quaternary structure, part of the 50S ribosomal subunit.

In terms of biological role, one of two assembly initiator proteins, it binds directly to the 5'-end of the 23S rRNA, where it nucleates assembly of the 50S subunit. Functionally, one of the proteins that surrounds the polypeptide exit tunnel on the outside of the subunit. The protein is Large ribosomal subunit protein uL24 of Delftia acidovorans (strain DSM 14801 / SPH-1).